The primary structure comprises 194 residues: uncharacterized protein (194 aa).

Disordered regions lie at residues 1–72 (MAAK…PAAE) and 113–194 (VLIP…SLAV). Positions 26–39 (AEGRSSEGRKERTA) are enriched in basic and acidic residues. Polar residues predominate over residues 146-171 (GSSSTSRNQVASLAYRTQNTAASQPR).

This is an uncharacterized protein from Homo sapiens (Human).